The chain runs to 593 residues: PiggyBac transposable element-derived protein 3 (593 aa).

2 disordered regions span residues 27–53 (IQPPENATAPVSDEESGDEEGGTINNL) and 69–105 (SDAESDSDDPSYAPKDDSPDEVPSTFTVQQPPPSRRR). Residues 38 to 47 (SDEESGDEEG) show a composition bias toward acidic residues. Ser86 carries the post-translational modification Phosphoserine.

Expressed in heart and oocytes, but not in granulosa cells (at protein level).

The protein resides in the nucleus. In terms of biological role, binds in vitro to PGBD3-related transposable elements, called MER85s; these non-autonomous 140 bp elements are characterized by the presence of PGBD3 terminal inverted repeats and the absence of internal transposase ORF. The chain is PiggyBac transposable element-derived protein 3 (PGBD3) from Homo sapiens (Human).